Reading from the N-terminus, the 858-residue chain is MASYTPMIQQYLNIKAEYQDAFLFFRLGDFYEMFFDDAKEASQELEITLTSRDGGTIPMCGVPYHSASAYIEQLISKGYKVAICEQVEDPKTAKGVVKREVVQLITPGTVMEGKGLSENENNFIASVTKFENGYGLALSDLSTGENMAAFIDRLDEVVSEIYSVGAKEIVVSKHLDEETVKTLKERCQATISYEDSDELIDEAERLVSRLSEQLRSTFLTLYAYLRRTQKRSLDHLQQVQVFELEQTMKIDLYSKRNLELTETIRSKSKKGSLLWLLDETKTAMGGRLLKQWIDRPLIRLSHIKERQEMVQILMDHFFEREDLRERLKQVYDLERLAGRVAFGNVNARDLIQLKESLKQVPAIKELVHSLPEEMAKSRANDIDLCDDLLNLLEDALYENPPMTLKEGNLIKDGYNAKLDEYRDASRNGKDWIARLEQQEREYTGIRSLKVGFNKVFGYYIEVTRANTHLLEEGRYERKQTLANAERYITPELKEKEALILEAESNISELEYELFAALREQVKVYIPRLQLLAKQMSELDALQCFATVSEKRRYIRPEFSEDEVDVIDGRHPVVEKVMDHQEYVPNDCHMGNGRQTLLITGPNMSGKSTYMRQMALISILAQIGCFVPASKATLPIFDQIFTRIGAADDLISGQSTFMVEMLEAKNAMVHATKNSLILFDEIGRGTSTYDGMALAQAIIEFVHDHVGAKTLFSTHYHELTVLESQLSELKNVHVRAEEHEGTVVFLHQIKEGAADKSYGIHVAQLAELPDAIIDRAQTILTELESGSHEVTPHVSAAPKTEKAEEKQQLSFFEVEEKPQTKPVLKQKDQAVIEELKSFNLMDMTPLEAMTKLYELQKKL.

600–607 (GPNMSGKS) provides a ligand contact to ATP.

Belongs to the DNA mismatch repair MutS family.

In terms of biological role, this protein is involved in the repair of mismatches in DNA. It is possible that it carries out the mismatch recognition step. This protein has a weak ATPase activity. This chain is DNA mismatch repair protein MutS, found in Bacillus pumilus (strain SAFR-032).